The primary structure comprises 338 residues: tRNA N6-adenosine threonylcarbamoyltransferase (338 aa).

Positions 111 and 115 each coordinate Fe cation. Substrate-binding positions include 134 to 138 (LLSGG), Asp-167, Gly-180, and Asn-275. Asp-304 provides a ligand contact to Fe cation.

Belongs to the KAE1 / TsaD family. Fe(2+) is required as a cofactor.

It is found in the cytoplasm. It catalyses the reaction L-threonylcarbamoyladenylate + adenosine(37) in tRNA = N(6)-L-threonylcarbamoyladenosine(37) in tRNA + AMP + H(+). Functionally, required for the formation of a threonylcarbamoyl group on adenosine at position 37 (t(6)A37) in tRNAs that read codons beginning with adenine. Is involved in the transfer of the threonylcarbamoyl moiety of threonylcarbamoyl-AMP (TC-AMP) to the N6 group of A37, together with TsaE and TsaB. TsaD likely plays a direct catalytic role in this reaction. This Leptospira borgpetersenii serovar Hardjo-bovis (strain JB197) protein is tRNA N6-adenosine threonylcarbamoyltransferase.